The following is a 605-amino-acid chain: Elongation factor 4 (605 aa).

Residues 11 to 193 (KNIRNFSIIA…RLVDVIPAPE (183 aa)) enclose the tr-type G domain. GTP contacts are provided by residues 23 to 28 (DHGKST) and 140 to 143 (NKID).

This sequence belongs to the TRAFAC class translation factor GTPase superfamily. Classic translation factor GTPase family. LepA subfamily.

Its subcellular location is the cell inner membrane. It carries out the reaction GTP + H2O = GDP + phosphate + H(+). Required for accurate and efficient protein synthesis under certain stress conditions. May act as a fidelity factor of the translation reaction, by catalyzing a one-codon backward translocation of tRNAs on improperly translocated ribosomes. Back-translocation proceeds from a post-translocation (POST) complex to a pre-translocation (PRE) complex, thus giving elongation factor G a second chance to translocate the tRNAs correctly. Binds to ribosomes in a GTP-dependent manner. The protein is Elongation factor 4 of Acinetobacter baylyi (strain ATCC 33305 / BD413 / ADP1).